The primary structure comprises 163 residues: 2-C-methyl-D-erythritol 2,4-cyclodiphosphate synthase (163 aa).

Positions 15 and 17 each coordinate a divalent metal cation. 4-CDP-2-C-methyl-D-erythritol 2-phosphate contacts are provided by residues Asp-15–His-17 and His-41–Ser-42. Residue His-49 coordinates a divalent metal cation. 4-CDP-2-C-methyl-D-erythritol 2-phosphate is bound by residues Asp-63–Gly-65 and Thr-139–Glu-142.

The protein belongs to the IspF family. Homotrimer. The cofactor is a divalent metal cation.

The enzyme catalyses 4-CDP-2-C-methyl-D-erythritol 2-phosphate = 2-C-methyl-D-erythritol 2,4-cyclic diphosphate + CMP. Its pathway is isoprenoid biosynthesis; isopentenyl diphosphate biosynthesis via DXP pathway; isopentenyl diphosphate from 1-deoxy-D-xylulose 5-phosphate: step 4/6. Involved in the biosynthesis of isopentenyl diphosphate (IPP) and dimethylallyl diphosphate (DMAPP), two major building blocks of isoprenoid compounds. Catalyzes the conversion of 4-diphosphocytidyl-2-C-methyl-D-erythritol 2-phosphate (CDP-ME2P) to 2-C-methyl-D-erythritol 2,4-cyclodiphosphate (ME-CPP) with a corresponding release of cytidine 5-monophosphate (CMP). The protein is 2-C-methyl-D-erythritol 2,4-cyclodiphosphate synthase of Gloeobacter violaceus (strain ATCC 29082 / PCC 7421).